The following is a 270-amino-acid chain: Putative ABC transporter ATP-binding protein MG304 (270 aa).

The 232-residue stretch at 1-232 (MLQVKNLSFK…LDLFHNHHFN (232 aa)) folds into the ABC transporter domain. 36–43 (GHNGSGKS) provides a ligand contact to ATP.

The protein belongs to the ABC transporter superfamily.

This chain is Putative ABC transporter ATP-binding protein MG304, found in Mycoplasma genitalium (strain ATCC 33530 / DSM 19775 / NCTC 10195 / G37) (Mycoplasmoides genitalium).